Consider the following 1212-residue polypeptide: CST complex subunit CTC1 (1212 aa).

This sequence belongs to the CTC1 family. As to quaternary structure, component of the CST complex, composed of TEN1/C17orf106, CTC1/C17orf68 and STN1; in the complex interacts directly with STN1. Interacts with ACD and POT1.

The protein localises to the nucleus. It localises to the chromosome. Its subcellular location is the telomere. Its function is as follows. Component of the CST complex proposed to act as a specialized replication factor promoting DNA replication under conditions of replication stress or natural replication barriers such as the telomere duplex. The CST complex binds single-stranded DNA with high affinity in a sequence-independent manner, while isolated subunits bind DNA with low affinity by themselves. Initially the CST complex has been proposed to protect telomeres from DNA degradation. However, the CST complex has been shown to be involved in several aspects of telomere replication. The CST complex inhibits telomerase and is involved in telomere length homeostasis; it is proposed to bind to newly telomerase-synthesized 3' overhangs and to terminate telomerase action implicating the association with the ACD:POT1 complex thus interfering with its telomerase stimulation activity. The CST complex is also proposed to be involved in fill-in synthesis of the telomeric C-strand probably implicating recruitment and activation of DNA polymerase alpha. The CST complex facilitates recovery from many forms of exogenous DNA damage; seems to be involved in the re-initiation of DNA replication at repaired forks and/or dormant origins. Involved in telomere maintenance. Involved in genome stability. May be in involved in telomeric C-strand fill-in during late S/G2 phase. This chain is CST complex subunit CTC1 (Ctc1), found in Mus musculus (Mouse).